Reading from the N-terminus, the 312-residue chain is MKVTVECALLITLIVEIIIGCLGNGFIAVVNIMDWTKRRRFSLVDQILTALAISRLAFVWSLLTVLVISELHSSLLITRKMLRIINNFWTVTNHFSIWLATCLSIFYFLKIANFSNSIFLSLRWRVKTVVSLTLLVSLLLLLVNVIIINTCIVISVEGYKVNMSYSSHFNNNPQISRIPLFTNTMFTFIPFTVTLTIFLLLIFSLWRHLKKMQHRAKGPRDPSTTAHIKALQMVVTFLFLYTIFFLALVMQAWNNEIQSKTVFNLVFESIALAFPSGHSCVLILGNSKLRQAFLTIIWWLRSSFNAAELSSP.

Residues Met1–Leu9 are Extracellular-facing. The helical transmembrane segment at Leu10–Val30 threads the bilayer. At Asn31 to Gln46 the chain is on the cytoplasmic side. Residues Ile47–Val67 form a helical membrane-spanning segment. Residues Ile68–Asn87 lie on the Extracellular side of the membrane. Residues Phe88–Phe108 traverse the membrane as a helical segment. The Cytoplasmic segment spans residues Leu109 to Thr133. Residues Leu134–Ile154 form a helical membrane-spanning segment. The Extracellular segment spans residues Ser155–Met185. An N-linked (GlcNAc...) asparagine glycan is attached at Asn162. The helical transmembrane segment at Phe186–Trp206 threads the bilayer. At Arg207–Lys229 the chain is on the cytoplasmic side. The chain crosses the membrane as a helical span at residues Ala230–Met250. The Extracellular portion of the chain corresponds to Gln251–Asn264. Residues Leu265–Gly285 traverse the membrane as a helical segment. At Asn286–Pro312 the chain is on the cytoplasmic side.

It belongs to the G-protein coupled receptor T2R family.

It localises to the membrane. Its function is as follows. Putative taste receptor which may play a role in the perception of bitterness. In Rattus norvegicus (Rat), this protein is Taste receptor type 2 member 140.